The sequence spans 158 residues: NAD(P)H-quinone oxidoreductase subunit J, chloroplastic (158 aa).

This sequence belongs to the complex I 30 kDa subunit family. NDH is composed of at least 16 different subunits, 5 of which are encoded in the nucleus.

It is found in the plastid. Its subcellular location is the chloroplast thylakoid membrane. The enzyme catalyses a plastoquinone + NADH + (n+1) H(+)(in) = a plastoquinol + NAD(+) + n H(+)(out). It catalyses the reaction a plastoquinone + NADPH + (n+1) H(+)(in) = a plastoquinol + NADP(+) + n H(+)(out). Its function is as follows. NDH shuttles electrons from NAD(P)H:plastoquinone, via FMN and iron-sulfur (Fe-S) centers, to quinones in the photosynthetic chain and possibly in a chloroplast respiratory chain. The immediate electron acceptor for the enzyme in this species is believed to be plastoquinone. Couples the redox reaction to proton translocation, and thus conserves the redox energy in a proton gradient. The polypeptide is NAD(P)H-quinone oxidoreductase subunit J, chloroplastic (Crucihimalaya wallichii (Rock-cress)).